The sequence spans 399 residues: Mitochondrial glycine transporter (399 aa).

Solcar repeat units lie at residues 35–137, 164–251, and 266–374; these read IPPY…LRSV, LSTT…CKTN, and GNWM…GRSW. The next 6 helical transmembrane spans lie at 41–66, 112–138, 170–195, 226–249, 270–296, and 349–367; these read LAFG…TRLQ, GTAP…RSVA, LLTG…ARFE, GFTA…EACK, VVSA…KTRM, and GLGL…GWSI. The disordered stretch occupies residues 379-399; sequence EASSSAQEAGTGTRLLDHKQV.

This sequence belongs to the mitochondrial carrier (TC 2.A.29) family. SLC25A38 subfamily.

It is found in the mitochondrion inner membrane. It carries out the reaction glycine(in) = glycine(out). In terms of biological role, mitochondrial glycine transporter that imports glycine into the mitochondrial matrix. Plays an important role in providing glycine for the first enzymatic step in heme biosynthesis, the condensation of glycine with succinyl-CoA to produce 5-aminolevulinate (ALA) in the mitochondrial matrix. This chain is Mitochondrial glycine transporter, found in Mycosarcoma maydis (Corn smut fungus).